Here is a 362-residue protein sequence, read N- to C-terminus: Phosphoserine aminotransferase (362 aa).

The L-glutamate site is built by serine 9 and arginine 42. Residues 76-77 (GR), tryptophan 102, threonine 153, aspartate 174, and glutamine 197 each bind pyridoxal 5'-phosphate. At lysine 198 the chain carries N6-(pyridoxal phosphate)lysine. 239 to 240 (NT) serves as a coordination point for pyridoxal 5'-phosphate.

The protein belongs to the class-V pyridoxal-phosphate-dependent aminotransferase family. SerC subfamily. In terms of assembly, homodimer. The cofactor is pyridoxal 5'-phosphate.

It is found in the cytoplasm. The enzyme catalyses O-phospho-L-serine + 2-oxoglutarate = 3-phosphooxypyruvate + L-glutamate. It carries out the reaction 4-(phosphooxy)-L-threonine + 2-oxoglutarate = (R)-3-hydroxy-2-oxo-4-phosphooxybutanoate + L-glutamate. Its pathway is amino-acid biosynthesis; L-serine biosynthesis; L-serine from 3-phospho-D-glycerate: step 2/3. The protein operates within cofactor biosynthesis; pyridoxine 5'-phosphate biosynthesis; pyridoxine 5'-phosphate from D-erythrose 4-phosphate: step 3/5. In terms of biological role, catalyzes the reversible conversion of 3-phosphohydroxypyruvate to phosphoserine and of 3-hydroxy-2-oxo-4-phosphonooxybutanoate to phosphohydroxythreonine. This Escherichia fergusonii (strain ATCC 35469 / DSM 13698 / CCUG 18766 / IAM 14443 / JCM 21226 / LMG 7866 / NBRC 102419 / NCTC 12128 / CDC 0568-73) protein is Phosphoserine aminotransferase.